The chain runs to 54 residues: UPF0391 membrane protein Rmet_0093 (54 aa).

The next 2 helical transmembrane spans lie at 5–25 (ALVFFIVALIAAIFGFGGIAA) and 30–50 (IAKILFLIFLVVAIVTFVMGL).

It belongs to the UPF0391 family.

The protein localises to the cell membrane. This chain is UPF0391 membrane protein Rmet_0093, found in Cupriavidus metallidurans (strain ATCC 43123 / DSM 2839 / NBRC 102507 / CH34) (Ralstonia metallidurans).